Here is a 710-residue protein sequence, read N- to C-terminus: Probable threonine--tRNA ligase 1, cytoplasmic (710 aa).

The tract at residues 1-35 is disordered; the sequence is MSDSQENKPVETPTEVKPVAEKKPAAEKKEKKPAV. The segment covering 18-33 has biased composition (basic and acidic residues); sequence PVAEKKPAAEKKEKKP. Residues 72–137 form the TGS domain; that stretch reads KEEPINVTLP…EADCNLQLCK (66 aa).

Belongs to the class-II aminoacyl-tRNA synthetase family.

The protein resides in the cytoplasm. It catalyses the reaction tRNA(Thr) + L-threonine + ATP = L-threonyl-tRNA(Thr) + AMP + diphosphate + H(+). This is Probable threonine--tRNA ligase 1, cytoplasmic (thrS1) from Dictyostelium discoideum (Social amoeba).